The primary structure comprises 91 residues: Uteroglobin (91 aa).

A signal peptide spans 1–21 (MKLTITLALVTLALLCSPASA).

It belongs to the secretoglobin family. In terms of assembly, antiparallel homodimer; disulfide-linked. Interaction with LMBR1L is controversial.

It localises to the secreted. Uteroglobin binds progesterone specifically and with high affinity. It may regulate progesterone concentrations reaching the blastocyst. It is also a potent inhibitor of phospholipase A2. This is Uteroglobin (SCGB1A1) from Lepus capensis (Brown hare).